The following is a 1373-amino-acid chain: DNA-directed RNA polymerase subunit beta (1373 aa).

The protein belongs to the RNA polymerase beta chain family. As to quaternary structure, the RNAP catalytic core consists of 2 alpha, 1 beta, 1 beta' and 1 omega subunit. When a sigma factor is associated with the core the holoenzyme is formed, which can initiate transcription.

The catalysed reaction is RNA(n) + a ribonucleoside 5'-triphosphate = RNA(n+1) + diphosphate. In terms of biological role, DNA-dependent RNA polymerase catalyzes the transcription of DNA into RNA using the four ribonucleoside triphosphates as substrates. The chain is DNA-directed RNA polymerase subunit beta from Rickettsia massiliae (strain Mtu5).